Consider the following 303-residue polypeptide: L(+)-tartrate dehydratase subunit alpha (303 aa).

The iron-sulfur cluster site is built by C71, C190, and C277.

Belongs to the class-I fumarase family. In terms of assembly, tetramer of two alpha and two beta subunits. The cofactor is iron-sulfur cluster.

It catalyses the reaction (2R,3R)-tartrate = oxaloacetate + H2O. The chain is L(+)-tartrate dehydratase subunit alpha (ttdA) from Escherichia coli O6:H1 (strain CFT073 / ATCC 700928 / UPEC).